A 213-amino-acid polypeptide reads, in one-letter code: Redox-sensing transcriptional repressor Rex (213 aa).

Positions 17 to 56 form a DNA-binding region, H-T-H motif; it reads LYYRIFKRFYADQVEKASSKQIADAMGIDSATVRRDFSYF. 91 to 96 serves as a coordination point for NAD(+); the sequence is GCGNIG.

It belongs to the transcriptional regulatory Rex family. Homodimer.

It is found in the cytoplasm. Functionally, modulates transcription in response to changes in cellular NADH/NAD(+) redox state. This Streptococcus uberis (strain ATCC BAA-854 / 0140J) protein is Redox-sensing transcriptional repressor Rex.